A 518-amino-acid polypeptide reads, in one-letter code: FAD-dependent monooxygenase tpcD (518 aa).

Positions 1–22 (MQLLGTLSWLYAIQASIGSSKA) are cleaved as a signal peptide. An N-linked (GlcNAc...) asparagine glycan is attached at Asn61. One can recognise an FAD-binding PCMH-type domain in the interval 75–246 (QSAQPACLVH…TRFDLDVFQQ (172 aa)). At His112 the chain carries Pros-8alpha-FAD histidine. N-linked (GlcNAc...) asparagine glycosylation is found at Asn163, Asn208, Asn216, and Asn346.

Belongs to the oxygen-dependent FAD-linked oxidoreductase family. FAD serves as cofactor.

Its pathway is secondary metabolite biosynthesis; terpenoid biosynthesis. Its function is as follows. FAD-dependent monooxygenase; part of the gene cluster that mediates the biosynthesis of terpestacin. The bifunctional terpene synthase tpcA converts isopentenyl diphosphate (IPP) and dimethylallyl diphosphate (DMAPP) into the sesterterpene preterpestacin I. The C-terminal prenyltransferase (PT) domain of tpcA catalyzes formation of GFPP, whereas the N-terminal terpene cyclase (TC) domain catalyzes the cyclization of GFPP into preterpestacin I. The cytochrome P450 monooxygenase tpcB then hydroxylates preterpestacin I to yield 24-hydroxypreterpstacin I (renamed as preterpestacin II) whereas the cytochrome P450 monooxygenase tpcC further hydroxylates preterpestacin II to yield 16,17-dihydroxypreterpestacin II (renamed as preterpestacin III). Finally, the FAD-dependent monooxygenase tpcD converts preterpestacin III into terpestacin. The polypeptide is FAD-dependent monooxygenase tpcD (Cochliobolus heterostrophus (strain C5 / ATCC 48332 / race O) (Southern corn leaf blight fungus)).